Here is a 518-residue protein sequence, read N- to C-terminus: Lysine 5,6-aminomutase alpha subunit (518 aa).

Residues 184–189 (RTTGQS), Ser238, Tyr263, Arg268, and Asn299 each bind pyridoxal 5'-phosphate.

The protein belongs to the KamD family. Heterotetramer of 2 alpha and 2 beta subunits. Adenosylcob(III)alamin is required as a cofactor. Pyridoxal 5'-phosphate serves as cofactor.

It carries out the reaction (3S)-3,6-diaminohexanoate = (3S,5S)-3,5-diaminohexanoate. It catalyses the reaction D-lysine = (2R,5S)-2,5-diaminohexanoate. The protein operates within amino-acid degradation; L-lysine degradation via acetate pathway. Its function is as follows. Catalyzes the migration of the L-beta-lysine and D-lysine epsilon amino group to the delta carbon to produce 3,5-diaminohexanoate and 2,5-diaminohexanoate, respectively. This is Lysine 5,6-aminomutase alpha subunit from Fusobacterium nucleatum subsp. nucleatum (strain ATCC 25586 / DSM 15643 / BCRC 10681 / CIP 101130 / JCM 8532 / KCTC 2640 / LMG 13131 / VPI 4355).